A 492-amino-acid chain; its full sequence is PHO85 cyclin-8 (492 aa).

Disordered regions lie at residues 1 to 32 (MAND…DNDS), 143 to 163 (SGSG…GTGR), and 223 to 252 (KVNS…ENES). The segment covering 8–20 (NKSLINDALTRSM) has biased composition (polar residues). Positions 23-32 (FYDDDDDNDS) are enriched in acidic residues. Ser32 is subject to Phosphoserine.

This sequence belongs to the cyclin family. PHO80 subfamily. Forms a cyclin-CDK complex with PHO85.

Its subcellular location is the cytoplasm. The protein resides in the nucleus. In terms of biological role, cyclin partner of the cyclin-dependent kinase (CDK) PHO85. Together with cyclin PCL10, negatively controls glycogen accumulation under favorable growth conditions. Involved in phosphorylation and negative regulation of glycogen synthase GSY2. Also has minor GLC8 kinase activity. The sequence is that of PHO85 cyclin-8 (PCL8) from Saccharomyces cerevisiae (strain ATCC 204508 / S288c) (Baker's yeast).